The primary structure comprises 88 residues: Large ribosomal subunit protein eL31 (88 aa).

The protein belongs to the eukaryotic ribosomal protein eL31 family.

This chain is Large ribosomal subunit protein eL31, found in Saccharolobus islandicus (strain Y.N.15.51 / Yellowstone #2) (Sulfolobus islandicus).